The chain runs to 460 residues: Glycogen synthase (460 aa).

Position 15 (lysine 15) interacts with ADP-alpha-D-glucose.

This sequence belongs to the glycosyltransferase 1 family. Bacterial/plant glycogen synthase subfamily.

The enzyme catalyses [(1-&gt;4)-alpha-D-glucosyl](n) + ADP-alpha-D-glucose = [(1-&gt;4)-alpha-D-glucosyl](n+1) + ADP + H(+). It functions in the pathway glycan biosynthesis; glycogen biosynthesis. Its function is as follows. Synthesizes alpha-1,4-glucan chains using ADP-glucose. This Trichodesmium erythraeum (strain IMS101) protein is Glycogen synthase.